We begin with the raw amino-acid sequence, 41 residues long: Submaxillary gland androgen-regulated protein 2, isoform beta (41 aa).

A signal peptide spans 1–22; the sequence is MKALYMVFVLWVLIGCFLRLLK.

It is found in the secreted. Its function is as follows. May play a role in protection or detoxification. This is Submaxillary gland androgen-regulated protein 2, isoform beta (Smr2) from Mus musculus (Mouse).